Consider the following 819-residue polypeptide: MNKAKNSGAVPQFVDNFEDFYNNGDDILNNKHKEEINFVKYRIFDTHLINYNNNNNNKNNNNNNNNNENTTITNKLNEIKEYLILNYIKDYIWQKEPFNLKIYDHKKKQQQQQQLPIHFYGNTKFEESIDDEWFIVYILLELTKKFQSLIVSIKDNDGEFILIETAQALPKWIKPTNSNNRVYLKNGEIHIIPLPSDPSQLDTIPYKMDTNTALSILSSSSNNIITKVSNEINEILKNRLKRFYNGEYFLKDQNQIKLAAIPIEIGYLLNQYPQLISDITTTFYNRDSDDMKTISTMKRFPMSRERDSFGNSGQLITTNIRFTRCLYAMLKLQQWNSPKNFHPQLPKPSHPTYDSRSLGVKIICGLEMVYNRSKRNSVSSYHRFNDDLNWLNYLKQLKSNNYFNDETIGSKLYKEKLLIAKNQYLKNNINNNNNNNNKEEESIYKLIDQVTNSKSVDEMIKILQESDKSKIESEDDWLNEENPDKFEDLITEFENDRQKQQQKQQQQQQQQQQNKEGKKEVKENNNNNNNNNNNNNNNNNNNNNNNNNNNNDSNLINDFSNQFKSMLSQLSSFDGVEFNEKSGNSKNKTKSSAYGNGGDDNISFDSNKFMDILKGFTDNNKYDDDYDDDDDDDDDMYQDIDNYEDSDDKDDDEDDENDEDDEDDGFEEYEDEDEDDDDEKEFQYVEFLKKSTIKQYMERMDQELNLKIIASSFELESTKLPKEFDDIEKSNNNNNNNINNNDKDVDEDDNENYKVNQKVDLNLNLVKNLLESLTEQQGFAGPASTLLKEMSDNNSKKREKKKTSSKKLIPKKGKVKENK.

Disordered stretches follow at residues 494 to 558 (ENDR…LIND), 578 to 603 (FNEKSGNSKNKTKSSAYGNGGDDNIS), 617 to 680 (TDNN…DDEK), 725 to 749 (DDIEKSNNNNNNNINNNDKDVDEDD), and 778 to 819 (GFAG…KENK). 3 stretches are compositionally biased toward low complexity: residues 501 to 514 (QQKQQQQQQQQQQN), 524 to 551 (NNNNNNNNNNNNNNNNNNNNNNNNNNNN), and 581 to 592 (KSGNSKNKTKSS). Positions 624–680 (DDYDDDDDDDDDMYQDIDNYEDSDDKDDDEDDENDEDDEDDGFEEYEDEDEDDDDEK) are enriched in acidic residues. Residues 730-740 (SNNNNNNNINN) show a composition bias toward low complexity. A compositionally biased stretch (basic residues) spans 797–819 (KREKKKTSSKKLIPKKGKVKENK).

This sequence belongs to the ECD family.

May act as a transcriptional activator. This is Protein ecdysoneless homolog (ecd) from Dictyostelium discoideum (Social amoeba).